The primary structure comprises 131 residues: MIKKYEACFLFKSEELEYKVALEDVKKQLTAFNASDFVENSLGERALEYSIRKQSRGRYEIIEFKMDSSNLKELEVQLRLIKNLLRYMILVKINKKVNVKKVKRRNFREFKDNRDTREKELPESTADVKVD.

It belongs to the bacterial ribosomal protein bS6 family.

Binds together with bS18 to 16S ribosomal RNA. The polypeptide is Small ribosomal subunit protein bS6 (Borrelia hermsii (strain HS1 / DAH)).